The following is a 286-amino-acid chain: Bifunctional protein FolD (286 aa).

NADP(+) contacts are provided by residues 164–166 (GTS) and Ile-230.

The protein belongs to the tetrahydrofolate dehydrogenase/cyclohydrolase family. In terms of assembly, homodimer.

It catalyses the reaction (6R)-5,10-methylene-5,6,7,8-tetrahydrofolate + NADP(+) = (6R)-5,10-methenyltetrahydrofolate + NADPH. The catalysed reaction is (6R)-5,10-methenyltetrahydrofolate + H2O = (6R)-10-formyltetrahydrofolate + H(+). The protein operates within one-carbon metabolism; tetrahydrofolate interconversion. Catalyzes the oxidation of 5,10-methylenetetrahydrofolate to 5,10-methenyltetrahydrofolate and then the hydrolysis of 5,10-methenyltetrahydrofolate to 10-formyltetrahydrofolate. The protein is Bifunctional protein FolD of Mesoplasma florum (strain ATCC 33453 / NBRC 100688 / NCTC 11704 / L1) (Acholeplasma florum).